A 120-amino-acid chain; its full sequence is Ribonuclease P protein component (120 aa).

Belongs to the RnpA family. In terms of assembly, consists of a catalytic RNA component (M1 or rnpB) and a protein subunit.

It catalyses the reaction Endonucleolytic cleavage of RNA, removing 5'-extranucleotides from tRNA precursor.. Functionally, RNaseP catalyzes the removal of the 5'-leader sequence from pre-tRNA to produce the mature 5'-terminus. It can also cleave other RNA substrates such as 4.5S RNA. The protein component plays an auxiliary but essential role in vivo by binding to the 5'-leader sequence and broadening the substrate specificity of the ribozyme. The sequence is that of Ribonuclease P protein component from Blochmanniella floridana.